The chain runs to 313 residues: Protein FixB (313 aa).

Residue 255-283 (LYLAVGISGQIQHMVGANASQTIFAINKD) participates in FAD binding.

Belongs to the ETF alpha-subunit/FixB family. Heterodimer of FixA and FixB.

It functions in the pathway amine and polyamine metabolism; carnitine metabolism. Required for anaerobic carnitine reduction. May bring reductant to CaiA. The chain is Protein FixB from Shigella dysenteriae serotype 1 (strain Sd197).